A 319-amino-acid chain; its full sequence is Homoserine dehydrogenase (319 aa).

NADPH is bound by residues F10, T12, V13, R40, K57, S92, S93, S114, and K116. V13 contributes to the NAD(+) binding site. NADP(+)-binding residues include V13 and R40. S92 lines the NAD(+) pocket. Residue S92 coordinates NADP(+). NADP(+) contacts are provided by S114 and K116. Residues E140, V143, A145, and T147 each contribute to the Na(+) site. Positions 197 and 200 each coordinate NADP(+). Positions 200 and 211 each coordinate L-homoserine. Residue K215 is the Proton donor of the active site. G296 lines the NADPH pocket. G296 contributes to the NAD(+) binding site. Residue G296 coordinates NADP(+).

It belongs to the homoserine dehydrogenase family. In terms of assembly, homodimer. A metal cation is required as a cofactor.

The enzyme catalyses L-homoserine + NAD(+) = L-aspartate 4-semialdehyde + NADH + H(+). It functions in the pathway amino-acid biosynthesis; L-methionine biosynthesis via de novo pathway; L-homoserine from L-aspartate: step 3/3. Its pathway is amino-acid biosynthesis; L-threonine biosynthesis; L-threonine from L-aspartate: step 3/5. In terms of biological role, catalyzes the conversion of L-aspartate-beta-semialdehyde (L-Asa) to L-homoserine (L-Hse), the third step in the biosynthesis of threonine and methionine from aspartate. Utilizes NADH but not NADPH as coenzyme. In Pyrococcus horikoshii (strain ATCC 700860 / DSM 12428 / JCM 9974 / NBRC 100139 / OT-3), this protein is Homoserine dehydrogenase.